A 450-amino-acid polypeptide reads, in one-letter code: Serine incorporator 2 (450 aa).

11 helical membrane-spanning segments follow: residues 5-27 (LGAC…ILCG), 40-57 (LLFT…IIML), 96-118 (AVYR…MICV), 131-150 (GFWF…AFYI), 160-182 (FYFG…VDFA), 203-225 (AGLF…LMFV), 238-257 (VFIS…AVLP), 264-286 (PNSG…WSAL), 315-337 (VWWD…FISL), 380-402 (TYSY…MTLT), and 417-439 (WTSV…WTLV).

The protein belongs to the TDE1 family.

The protein localises to the cell membrane. It carries out the reaction a 1,2-diacyl-sn-glycero-3-phospho-L-serine(in) = a 1,2-diacyl-sn-glycero-3-phospho-L-serine(out). The catalysed reaction is a 1,2-diacyl-sn-glycero-3-phosphocholine(in) = a 1,2-diacyl-sn-glycero-3-phosphocholine(out). It catalyses the reaction a 1,2-diacyl-sn-glycero-3-phosphoethanolamine(in) = a 1,2-diacyl-sn-glycero-3-phosphoethanolamine(out). In terms of biological role, non-ATP-dependent, non-specific lipid transporter for phosphatidylserine, phosphatidylcholine, and phosphatidylethanolamine. Functions as a scramblase that flips lipids in both directions across the membrane. In contrast to SERINC3 and SERINC5, has no effect on gammaretrovirus particles infectivity. This is Serine incorporator 2 (Serinc2) from Mus musculus (Mouse).